The chain runs to 250 residues: Probable fimbrial chaperone YfcS (250 aa).

A signal peptide spans 1-28; sequence MSDLLCSAKLGAMTLALLLSATSLSALA.

Belongs to the periplasmic pilus chaperone family.

It is found in the periplasm. Functionally, part of the yfcOPQRSUV fimbrial operon. Could contribute to adhesion to various surfaces in specific environmental niches. Increases adhesion to eukaryotic T24 bladder epithelial cells in the absence of fim genes. The protein is Probable fimbrial chaperone YfcS (yfcS) of Escherichia coli (strain K12).